We begin with the raw amino-acid sequence, 493 residues long: Cobyric acid synthase (493 aa).

The region spanning 246-440 (PIDIAVIKMP…IHGVFDGVVF (195 aa)) is the GATase cobBQ-type domain. Cys326 serves as the catalytic Nucleophile. The active site involves His432.

This sequence belongs to the CobB/CobQ family. CobQ subfamily.

It participates in cofactor biosynthesis; adenosylcobalamin biosynthesis. Catalyzes amidations at positions B, D, E, and G on adenosylcobyrinic A,C-diamide. NH(2) groups are provided by glutamine, and one molecule of ATP is hydrogenolyzed for each amidation. In Clostridium botulinum (strain Okra / Type B1), this protein is Cobyric acid synthase.